The sequence spans 113 residues: Cytochrome c (113 aa).

The heme c site is built by C21, C24, H25, and M90.

This sequence belongs to the cytochrome c family. In terms of processing, binds 1 heme c group covalently per subunit.

The protein resides in the mitochondrion intermembrane space. Electron carrier protein. The oxidized form of the cytochrome c heme group can accept an electron from the heme group of the cytochrome c1 subunit of cytochrome reductase. Cytochrome c then transfers this electron to the cytochrome oxidase complex, the final protein carrier in the mitochondrial electron-transport chain. This Dictyostelium discoideum (Social amoeba) protein is Cytochrome c (cytC).